The sequence spans 138 residues: Small ribosomal subunit protein uS11c (138 aa).

A disordered region spans residues 1 to 21 (MTKSIPRIGSRRGGRIASRKN). The span at 9–21 (GSRRGGRIASRKN) shows a compositional bias: basic residues.

The protein belongs to the universal ribosomal protein uS11 family. Part of the 30S ribosomal subunit.

The protein localises to the plastid. It localises to the chloroplast. This Calycanthus floridus var. glaucus (Eastern sweetshrub) protein is Small ribosomal subunit protein uS11c.